The sequence spans 509 residues: Transmembrane protein 102 (509 aa).

At 1–312 (MASTVWGGAP…VLLATPEPPR (312 aa)) the chain is on the extracellular side. A disordered region spans residues 167–236 (PPVPEESDMT…NPETPEPLET (70 aa)). Over residues 174–204 (DMTHQTHSKESPTDRENSVDPSHDYVPEPEP) the composition is skewed to basic and acidic residues. Positions 207 to 224 (SLQKSSSDLSESQSSYKD) are enriched in low complexity. Residues 313-329 (HLLLFDLIPVVTVTGWP) form a helical membrane-spanning segment. The Cytoplasmic segment spans residues 330–509 (DTARSHSWAG…GLAGVGGGTH (180 aa)).

In terms of assembly, interacts with CSF2RB; this interaction occurs preferentially in the absence of CSF2.

It localises to the cell membrane. Its function is as follows. Selectively involved in CSF2 deprivation-induced apoptosis via a mitochondria-dependent pathway. The polypeptide is Transmembrane protein 102 (Tmem102) (Mus musculus (Mouse)).